The primary structure comprises 211 residues: MSIMLKKWNELAEVKAELAARDWFFATSGNLSLKVTDAPLTFLVTASGKDKRKQTSEDFLLIDADGKPVEDTHLKPSAETLLHVEVYRRTNAGCVLHVHTVDNNIISDVYAQNREAVFSGQEIIKAFGIWEENAEVRIPIIDNYADIPTLANEFAKHIDGDTGAVLIQNHGITVWGRDAFEAKKHLEAWEFLFSWQVKRLLLQRAAVPLVD.

2 residues coordinate Zn(2+): H97 and H99.

This sequence belongs to the aldolase class II family. MtnB subfamily. As to quaternary structure, homotetramer. Zn(2+) serves as cofactor.

It carries out the reaction 5-(methylsulfanyl)-D-ribulose 1-phosphate = 5-methylsulfanyl-2,3-dioxopentyl phosphate + H2O. It participates in amino-acid biosynthesis; L-methionine biosynthesis via salvage pathway; L-methionine from S-methyl-5-thio-alpha-D-ribose 1-phosphate: step 2/6. In terms of biological role, catalyzes the dehydration of methylthioribulose-1-phosphate (MTRu-1-P) into 2,3-diketo-5-methylthiopentyl-1-phosphate (DK-MTP-1-P). This Geobacillus thermodenitrificans (strain NG80-2) protein is Methylthioribulose-1-phosphate dehydratase.